The primary structure comprises 180 residues: MAQVNGDLPAVNSATAQHLLDIPVIHDGVVAFRNNPFGKKSIAIGDSAYQTFAAPLLPYLARPWGYLRPYAEKADALGDQTLTKVEERVPVIKKPTEELYAGAKGIIALPIRTGFEAKDHVFKTYAQEKKKVGGENLVTYGKAIVSTTLITTSEIIIWVGDVMHYKKEEAKDVVNEKVNN.

This sequence belongs to the perilipin family. As to quaternary structure, interacts with class I hydrophobin Hydr1. Interacts also with the cAMP-dependent protein kinase catalytic subunit PkaC1.

It localises to the lipid droplet. In terms of biological role, lipid droplet coating protein that regulates lipid metabolism, appressorial turgor pressure, and virulence. Mature appressoria with high turgor pressure are essential to penetrate the leaf surface. The chain is Lipid droplet coating protein Cap20 from Colletotrichum siamense (Anthracnose fungus).